The following is a 615-amino-acid chain: MNIIFLIILFPLIGFLFLSLIQGTISERNTNIIGISSIFVSLIITFFYITGFINYSSQIFTQKLFSWISINELDIDCSLILDGLSLSMLAMILGIGLLIHIFSTWYMKDKEGYSRFFAYTNLFIASMSLLVLADNFLFMYLGWEIVSICSYLLIGFYYKTTNNTSCALKAFVFTRISDVFLIISMFLIYNKYGTFNFQEIKFLSNFLNVEDCFDLNVLTLCLLLGVMGKSAQLPLHTWLSDAMVGPTPVSALIHAATMVTAGVYLIARTHFLFLLTPKILYLISLIGIITIFISSFSALVQQDIKRILAYSTMSQIGYMFLALGVKAWTAAIVHLIVHAIFKALLFLSSGSLILSCNNEKNIFNLSKVSSKCPLLYVSFLVGGASLVSFPLITSGFYSKGNILFSVLKDGYFNLFLIGLFCSFLTSIYTFRMIFVIFHRSSVSFVFSNKRLAHNLPLLILLFFSTMFGYFIIRLPLFYVFPMVKSLENGKFLYEIISSFISFLGIFIAYHIWIKQPFWFFRFLKFKIIKLIHKFLLNGWYFDFFYKILFIHPYLFISKILSYEPFDFFPTFFVAFIKKTNSIVLKSVNGNVKCYISTMFVGINLFFILVLCSFLS.

Helical transmembrane passes span 1–21, 32–52, 79–99, 113–133, 136–156, 168–188, 247–267, 279–299, 327–347, 372–392, 410–430, 457–477, 491–511, 536–556, and 594–614; these read MNIIFLIILFPLIGFLFLSLI, IIGISSIFVSLIITFFYITGF, LILDGLSLSMLAMILGIGLLI, YSRFFAYTNLFIASMSLLVLA, FLFMYLGWEIVSICSYLLIGF, LKAFVFTRISDVFLIISMFLI, TPVSALIHAATMVTAGVYLIA, ILYLISLIGIITIFISSFSAL, AWTAAIVHLIVHAIFKALLFL, CPLLYVSFLVGGASLVSFPLI, GYFNLFLIGLFCSFLTSIYTF, LLILLFFSTMFGYFIIRLPLF, FLYEIISSFISFLGIFIAYHI, LNGWYFDFFYKILFIHPYLFI, and YISTMFVGINLFFILVLCSFL.

The protein belongs to the complex I subunit 5 family. Composed of 13 different subunits. Subunits NuoA, H, J, K, L, M, N constitute the membrane sector of the complex.

The protein localises to the cell membrane. The catalysed reaction is a quinone + NADH + 5 H(+)(in) = a quinol + NAD(+) + 4 H(+)(out). Its function is as follows. NDH-1 shuttles electrons from NADH, via FMN and iron-sulfur (Fe-S) centers, to quinones in the respiratory chain. Couples the redox reaction to proton translocation (for every two electrons transferred, four hydrogen ions are translocated across the cytoplasmic membrane), and thus conserves the redox energy in a proton gradient. The sequence is that of NADH-quinone oxidoreductase subunit L (nuoL) from Buchnera aphidicola subsp. Schizaphis graminum (strain Sg).